The chain runs to 845 residues: Meiotically up-regulated gene 4 protein (845 aa).

Residues 122-158 (LSTTDEQPKEPSIISISSSSSDPSSSPPPSSSLLKTP) are disordered. Residues 132-145 (PSIISISSSSSDPS) show a composition bias toward low complexity. Residues 726 to 746 (FLVFLTFTGMTLFILYQLTFP) form a helical membrane-spanning segment.

The protein localises to the membrane. Has a role in meiosis. The sequence is that of Meiotically up-regulated gene 4 protein (mug4) from Schizosaccharomyces pombe (strain 972 / ATCC 24843) (Fission yeast).